A 426-amino-acid chain; its full sequence is Dihydroorotase (426 aa).

Zn(2+)-binding residues include histidine 55 and histidine 57. Residues 57-59 and asparagine 89 each bind substrate; that span reads HLR. Zn(2+) contacts are provided by aspartate 147, histidine 174, histidine 233, and aspartate 306. The active site involves aspartate 306. Substrate-binding positions include histidine 310 and 324–325; that span reads FG.

Belongs to the metallo-dependent hydrolases superfamily. DHOase family. Class I DHOase subfamily. Zn(2+) serves as cofactor.

The catalysed reaction is (S)-dihydroorotate + H2O = N-carbamoyl-L-aspartate + H(+). It functions in the pathway pyrimidine metabolism; UMP biosynthesis via de novo pathway; (S)-dihydroorotate from bicarbonate: step 3/3. Catalyzes the reversible cyclization of carbamoyl aspartate to dihydroorotate. In Thermus aquaticus, this protein is Dihydroorotase.